Reading from the N-terminus, the 350-residue chain is tRNA uridine(34) hydroxylase (350 aa).

Positions 146–240 (DDPDALFIDM…YARKAREQGL (95 aa)) constitute a Rhodanese domain. The active-site Cysteine persulfide intermediate is the Cys200.

The protein belongs to the TrhO family.

It catalyses the reaction uridine(34) in tRNA + AH2 + O2 = 5-hydroxyuridine(34) in tRNA + A + H2O. Its function is as follows. Catalyzes oxygen-dependent 5-hydroxyuridine (ho5U) modification at position 34 in tRNAs, the first step in 5-carboxymethoxyuridine (cmo5U) biosynthesis. May be part of an alternate pathway, which is able to bypass cmo5U biogenesis in a subset of tRNAs under aerobic conditions. The chain is tRNA uridine(34) hydroxylase from Escherichia coli O127:H6 (strain E2348/69 / EPEC).